Consider the following 90-residue polypeptide: Small ribosomal subunit protein bS16 (90 aa).

The protein belongs to the bacterial ribosomal protein bS16 family.

The chain is Small ribosomal subunit protein bS16 from Heliobacterium modesticaldum (strain ATCC 51547 / Ice1).